A 227-amino-acid chain; its full sequence is Lipoprotein-releasing system ATP-binding protein LolD (227 aa).

Residues 6-227 form the ABC transporter domain; the sequence is LTSQKLYKSY…LHEGSLYARE (222 aa). Residue 42–49 coordinates ATP; the sequence is GPSGSGKS.

Belongs to the ABC transporter superfamily. Lipoprotein translocase (TC 3.A.1.125) family. As to quaternary structure, the complex is composed of two ATP-binding proteins (LolD) and two transmembrane proteins (LolC and LolE).

The protein resides in the cell inner membrane. Part of the ABC transporter complex LolCDE involved in the translocation of mature outer membrane-directed lipoproteins, from the inner membrane to the periplasmic chaperone, LolA. Responsible for the formation of the LolA-lipoprotein complex in an ATP-dependent manner. The polypeptide is Lipoprotein-releasing system ATP-binding protein LolD (Legionella pneumophila (strain Lens)).